The chain runs to 75 residues: Large ribosomal subunit protein bL28c (75 aa).

It belongs to the bacterial ribosomal protein bL28 family.

The protein resides in the plastid. Its subcellular location is the chloroplast. The protein is Large ribosomal subunit protein bL28c of Cyanidioschyzon merolae (strain NIES-3377 / 10D) (Unicellular red alga).